A 404-amino-acid polypeptide reads, in one-letter code: D-galactonate dehydratase family member PC1_0802 (404 aa).

Asparagine 37 and histidine 122 together coordinate substrate. Tyrosine 159 acts as the Proton donor/acceptor in catalysis. Residue aspartate 212 participates in Mg(2+) binding. Histidine 214 functions as the Proton donor/acceptor in the catalytic mechanism. Residues glutamate 238 and glutamate 264 each contribute to the Mg(2+) site. Residues glutamate 264, arginine 285, histidine 314, aspartate 318, and glutamate 341 each contribute to the substrate site.

The protein belongs to the mandelate racemase/muconate lactonizing enzyme family. GalD subfamily. It depends on Mg(2+) as a cofactor.

It carries out the reaction D-mannonate = 2-dehydro-3-deoxy-D-gluconate + H2O. Functionally, has low D-mannonate dehydratase activity (in vitro), suggesting that this is not a physiological substrate and that it has no significant role in D-mannonate degradation in vivo. Has no detectable activity with a panel of 70 other acid sugars (in vitro). This Pectobacterium carotovorum subsp. carotovorum (strain PC1) protein is D-galactonate dehydratase family member PC1_0802.